The primary structure comprises 370 residues: D-alanine--D-alanine ligase (370 aa).

The region spanning 142-348 (KQILTHHHIQ…YTALIDQLIQ (207 aa)) is the ATP-grasp domain. 172 to 227 (QAHVGDHLFIKPANQGSSIGIHKAENEQEYLDGLADAFKYDYKILVEESIDNPREV) contributes to the ATP binding site. Asp302, Glu315, and Asn317 together coordinate Mg(2+).

Belongs to the D-alanine--D-alanine ligase family. Mg(2+) serves as cofactor. The cofactor is Mn(2+).

Its subcellular location is the cytoplasm. The catalysed reaction is 2 D-alanine + ATP = D-alanyl-D-alanine + ADP + phosphate + H(+). The protein operates within cell wall biogenesis; peptidoglycan biosynthesis. Cell wall formation. The sequence is that of D-alanine--D-alanine ligase from Lactiplantibacillus plantarum (strain ATCC BAA-793 / NCIMB 8826 / WCFS1) (Lactobacillus plantarum).